Reading from the N-terminus, the 235-residue chain is MSDPREIAQRVLEEWEPKTKLGRLVKEGQITDIHEIFRKGYQIKEPEIVDVLLPEVNLRENQEVLDIALTVRMTDSGRRIRFRVLAAVGNRDGYVGLGIGHGREVGIAIRKAINYAKMNIIEIKRGCGSWECRCRRPHSIPFAVEGKEGSVRVKLMPGPRGLGLVIGDVGKKILTLAGVQDVWSQTLGETRTTVNFAKAVFNALYNTNRVAIKPEDIERYGIVVGRAMPTTFEVE.

An S5 DRBM domain is found at 60–123 (ENQEVLDIAL…NYAKMNIIEI (64 aa)). Zn(2+) is bound by residues Cys-127, Cys-132, Cys-134, and His-138.

It belongs to the universal ribosomal protein uS5 family. As to quaternary structure, part of the 30S ribosomal subunit. Contacts protein S4. The cofactor is Zn(2+).

With S4 and S12 plays an important role in translational accuracy. The sequence is that of Small ribosomal subunit protein uS5 from Thermococcus kodakarensis (strain ATCC BAA-918 / JCM 12380 / KOD1) (Pyrococcus kodakaraensis (strain KOD1)).